The chain runs to 82 residues: UPF0291 protein LVIS_1359 (82 aa).

It belongs to the UPF0291 family.

It localises to the cytoplasm. This is UPF0291 protein LVIS_1359 from Levilactobacillus brevis (strain ATCC 367 / BCRC 12310 / CIP 105137 / JCM 1170 / LMG 11437 / NCIMB 947 / NCTC 947) (Lactobacillus brevis).